The primary structure comprises 214 residues: Neuromodulin (214 aa).

Residues 1–214 form a disordered region; that stretch reads MLCCMRRTKQ…EEAKPDQENA (214 aa). S-palmitoyl cysteine attachment occurs at residues cysteine 3 and cysteine 4. 3 stretches are compositionally biased toward basic and acidic residues: residues 9 to 33, 52 to 88, and 95 to 122; these read KQVE…DKAH, MKDD…KTEE, and LEVK…KDTP. The IQ domain occupies 32 to 61; that stretch reads AHKAATKIQASFRGHIIRKKMKDDKKDDNS. The span at 124–133 shows a compositional bias: low complexity; it reads EENQASAESE. 3 stretches are compositionally biased toward basic and acidic residues: residues 150–160, 168–193, and 205–214; these read QAKEESKKADV, ASEK…EIKA, and EEAKPDQENA.

It belongs to the neuromodulin family. As to quaternary structure, binds calmodulin with a greater affinity in the absence of Ca(2+) than in its presence. Palmitoylated. Palmitoylation is essential for plasma membrane association.

It is found in the cell membrane. Its subcellular location is the cell projection. The protein resides in the growth cone membrane. The protein localises to the synapse. It localises to the filopodium membrane. In terms of biological role, this protein is associated with nerve growth. It is a major component of the motile 'growth cones' that form the tips of elongating axons. Plays a role in axonal and dendritic filopodia induction. This is Neuromodulin (gap43) from Xenopus laevis (African clawed frog).